Reading from the N-terminus, the 479-residue chain is Aspartyl/glutamyl-tRNA(Asn/Gln) amidotransferase subunit B (479 aa).

The protein belongs to the GatB/GatE family. GatB subfamily. In terms of assembly, heterotrimer of A, B and C subunits.

It carries out the reaction L-glutamyl-tRNA(Gln) + L-glutamine + ATP + H2O = L-glutaminyl-tRNA(Gln) + L-glutamate + ADP + phosphate + H(+). The catalysed reaction is L-aspartyl-tRNA(Asn) + L-glutamine + ATP + H2O = L-asparaginyl-tRNA(Asn) + L-glutamate + ADP + phosphate + 2 H(+). Allows the formation of correctly charged Asn-tRNA(Asn) or Gln-tRNA(Gln) through the transamidation of misacylated Asp-tRNA(Asn) or Glu-tRNA(Gln) in organisms which lack either or both of asparaginyl-tRNA or glutaminyl-tRNA synthetases. The reaction takes place in the presence of glutamine and ATP through an activated phospho-Asp-tRNA(Asn) or phospho-Glu-tRNA(Gln). This chain is Aspartyl/glutamyl-tRNA(Asn/Gln) amidotransferase subunit B, found in Streptococcus pyogenes serotype M5 (strain Manfredo).